We begin with the raw amino-acid sequence, 258 residues long: MNIVNDIASSKIQVHNLNFYYGKFHALKNITLNIAKNKVTAFIGPSGCGKSTLLRTFNKMYELYGEQRAEGKILLDGKNILTDKQDVALLRANVGMVFQKPTPFPMSIYDNIAFGVRLFEKLSRAEMDERVQWALTKAALWSETRDKLYQSGYSLSGGQQQRLCIARGIAIRPEVLLLDEPCSALDPISTGRIEELISELKSEYTVVIVTHNMQQAARCSDHTAFMYLGELIEFSDTDTLFTTPKMKQTEDYITGRYG.

The ABC transporter domain maps to 12–253 (IQVHNLNFYY…PKMKQTEDYI (242 aa)). 44 to 51 (GPSGCGKS) is an ATP binding site.

The protein belongs to the ABC transporter superfamily. Phosphate importer (TC 3.A.1.7) family. The complex is composed of two ATP-binding proteins (PstB), two transmembrane proteins (PstC and PstA) and a solute-binding protein (PstS).

Its subcellular location is the cell inner membrane. It catalyses the reaction phosphate(out) + ATP + H2O = ADP + 2 phosphate(in) + H(+). Part of the ABC transporter complex PstSACB involved in phosphate import. Responsible for energy coupling to the transport system. The chain is Phosphate import ATP-binding protein PstB from Photorhabdus laumondii subsp. laumondii (strain DSM 15139 / CIP 105565 / TT01) (Photorhabdus luminescens subsp. laumondii).